We begin with the raw amino-acid sequence, 150 residues long: Ribonuclease H (150 aa).

The RNase H type-1 domain occupies 3 to 144; the sequence is GEDIVEIYTD…ADALARQGMA (142 aa). 4 residues coordinate Mg(2+): D12, E50, D72, and D136.

The protein belongs to the RNase H family. As to quaternary structure, monomer. It depends on Mg(2+) as a cofactor.

The protein resides in the cytoplasm. The catalysed reaction is Endonucleolytic cleavage to 5'-phosphomonoester.. Functionally, endonuclease that specifically degrades the RNA of RNA-DNA hybrids. The sequence is that of Ribonuclease H from Parvibaculum lavamentivorans (strain DS-1 / DSM 13023 / NCIMB 13966).